The chain runs to 394 residues: Elongation factor Tu 1 (394 aa).

A tr-type G domain is found at 10 to 204 (KPHVNVGTIG…ALDNYIPEPE (195 aa)). The G1 stretch occupies residues 19 to 26 (GHVDHGKT). GTP is bound at residue 19–26 (GHVDHGKT). T26 contributes to the Mg(2+) binding site. The tract at residues 60 to 64 (GITIS) is G2. Positions 81–84 (DCPG) are G3. GTP-binding positions include 81–85 (DCPGH) and 136–139 (NKCD). A G4 region spans residues 136-139 (NKCD). The segment at 174-176 (SAL) is G5.

It belongs to the TRAFAC class translation factor GTPase superfamily. Classic translation factor GTPase family. EF-Tu/EF-1A subfamily. As to quaternary structure, monomer.

The protein resides in the cytoplasm. The catalysed reaction is GTP + H2O = GDP + phosphate + H(+). Functionally, GTP hydrolase that promotes the GTP-dependent binding of aminoacyl-tRNA to the A-site of ribosomes during protein biosynthesis. The protein is Elongation factor Tu 1 of Photobacterium profundum (strain SS9).